We begin with the raw amino-acid sequence, 505 residues long: Glycerol kinase (505 aa).

An ADP-binding site is contributed by Thr-14. 3 residues coordinate ATP: Thr-14, Thr-15, and Ser-16. Sn-glycerol 3-phosphate is bound at residue Thr-14. Arg-18 provides a ligand contact to ADP. Positions 84, 85, 136, and 246 each coordinate sn-glycerol 3-phosphate. 5 residues coordinate glycerol: Arg-84, Glu-85, Tyr-136, Asp-246, and Gln-247. Positions 268 and 311 each coordinate ADP. The ATP site is built by Thr-268, Gly-311, Gln-315, and Gly-412. ADP is bound by residues Gly-412 and Asn-416.

The protein belongs to the FGGY kinase family.

It catalyses the reaction glycerol + ATP = sn-glycerol 3-phosphate + ADP + H(+). The protein operates within polyol metabolism; glycerol degradation via glycerol kinase pathway; sn-glycerol 3-phosphate from glycerol: step 1/1. With respect to regulation, inhibited by fructose 1,6-bisphosphate (FBP). Key enzyme in the regulation of glycerol uptake and metabolism. Catalyzes the phosphorylation of glycerol to yield sn-glycerol 3-phosphate. The protein is Glycerol kinase of Vibrio cholerae serotype O1 (strain ATCC 39315 / El Tor Inaba N16961).